Reading from the N-terminus, the 609-residue chain is Albumin (609 aa).

The N-terminal stretch at 1-18 (MKWVTFISLLFLFSSAYS) is a signal peptide. Positions 19-24 (RGVFRR) are excised as a propeptide. Albumin domains are found at residues 19–210 (RGVF…DELR), 211–403 (DEGK…EFKP), and 404–601 (LVEE…KLVA). His27 serves as a coordination point for Cu cation. Ser29 carries the post-translational modification Phosphoserine. Ca(2+) is bound by residues Glu30 and Asp37. A disulfide bridge connects residues Cys77 and Cys86. Residues Ser82 and Ser89 each carry the phosphoserine modification. His91 lines the Zn(2+) pocket. 6 cysteine pairs are disulfide-bonded: Cys99/Cys115, Cys114/Cys125, Cys148/Cys193, Cys192/Cys201, Cys224/Cys270, and Cys269/Cys277. Thr107 carries the phosphothreonine modification. At Lys229 the chain carries N6-succinyllysine. Lys264 provides a ligand contact to (4Z,15Z)-bilirubin IXalpha. Glu268 provides a ligand contact to Ca(2+). Zn(2+) is bound by residues His271 and Asp273. Ca(2+) contacts are provided by Asp273, Glu276, Asp279, and Asp283. Disulfide bonds link Cys289-Cys303, Cys302-Cys313, Cys340-Cys385, Cys384-Cys393, Cys416-Cys462, Cys461-Cys472, Cys485-Cys501, and Cys500-Cys511. At Ser297 the chain carries Phosphoserine. Phosphoserine is present on Ser443. Residues Thr444 and Thr446 each carry the phosphothreonine modification. Position 460 is an N6-succinyllysine (Lys460). Ser513 bears the Phosphoserine mark. 2 disulfides stabilise this stretch: Cys538/Cys583 and Cys582/Cys591. The residue at position 543 (Lys543) is an N6-succinyllysine. Lys558 is subject to N6-methyllysine. Thr570 is modified (phosphothreonine). Lys588 bears the N6-succinyllysine mark.

It belongs to the ALB/AFP/VDB family. In terms of assembly, interacts with FCGRT; this interaction regulates ALB homeostasis. Interacts with TASOR. In plasma, occurs in a covalently-linked complex with chromophore-bound alpha-1-microglobulin; this interaction does not prevent fatty acid binding to ALB. Phosphorylated by FAM20C in the extracellular medium. In terms of tissue distribution, plasma.

It is found in the secreted. In terms of biological role, binds water, Ca(2+), Na(+), K(+), fatty acids, hormones, bilirubin and drugs. Its main function is the regulation of the colloidal osmotic pressure of blood. Major zinc transporter in plasma, typically binds about 80% of all plasma zinc. Major calcium and magnesium transporter in plasma, binds approximately 45% of circulating calcium and magnesium in plasma. Potentially has more than two calcium-binding sites and might additionally bind calcium in a non-specific manner. The shared binding site between zinc and calcium at residue Asp-273 suggests a crosstalk between zinc and calcium transport in the blood. The rank order of affinity is zinc &gt; calcium &gt; magnesium. Binds to the bacterial siderophore enterobactin and inhibits enterobactin-mediated iron uptake of E.coli from ferric transferrin, and may thereby limit the utilization of iron and growth of enteric bacteria such as E.coli. Does not prevent iron uptake by the bacterial siderophore aerobactin. This chain is Albumin (ALB), found in Pongo abelii (Sumatran orangutan).